The following is a 360-amino-acid chain: Phospho-N-acetylmuramoyl-pentapeptide-transferase (360 aa).

Residues 1–25 (MLVWLAEHLVKYYSGFNVFSYLTFR) are Periplasmic-facing. A helical transmembrane segment spans residues 26-46 (AIVSLLTALFISLWMGPRMIA). Topologically, residues 47–71 (RLQKLSFGQVVRNDGPESHFSKRGT) are cytoplasmic. The helical transmembrane segment at 72 to 92 (PTMGGIMILTSIVISVLLWAY) threads the bilayer. Position 93 (Pro-93) is a topological domain, periplasmic. Residues 94–114 (SNPYVWCVLVVLIGYGIIGFV) traverse the membrane as a helical segment. Residues 115–131 (DDYRKVVRKDTKGLIAR) lie on the Cytoplasmic side of the membrane. The helical transmembrane segment at 132–152 (WKYFWMSVIALGVAFALYLVG) threads the bilayer. Topologically, residues 153 to 167 (KDTPATQLVVPFFKD) are periplasmic. A helical membrane pass occupies residues 168-188 (VMPQLGLFYILLSYFVIVGTG). At 189 to 198 (NAVNLTDGLD) the chain is on the cytoplasmic side. The chain crosses the membrane as a helical span at residues 199–219 (GLAIMPTVFVAAGFALVAWAT). At 220–235 (GNMNFANYLHIPYLRH) the chain is on the periplasmic side. The helical transmembrane segment at 236-256 (AGELVIVCTAIVGAGLGFLWF) threads the bilayer. The Cytoplasmic segment spans residues 257–262 (NTYPAQ). A helical membrane pass occupies residues 263–283 (VFMGDVGSLALGGALGIIAVL). The Periplasmic portion of the chain corresponds to 284–287 (LRQE). A helical membrane pass occupies residues 288–308 (FLLVIMGGVFVVETLSVILQV). Residues 309–337 (GSFKLRGQRIFRMAPIHHHYELKGWPEPR) are Cytoplasmic-facing. A helical membrane pass occupies residues 338 to 358 (VIVRFWIISLMLVLIGLATLK). Residues 359 to 360 (VR) lie on the Periplasmic side of the membrane.

This sequence belongs to the glycosyltransferase 4 family. MraY subfamily. Mg(2+) serves as cofactor.

It is found in the cell inner membrane. It carries out the reaction UDP-N-acetyl-alpha-D-muramoyl-L-alanyl-gamma-D-glutamyl-meso-2,6-diaminopimeloyl-D-alanyl-D-alanine + di-trans,octa-cis-undecaprenyl phosphate = di-trans,octa-cis-undecaprenyl diphospho-N-acetyl-alpha-D-muramoyl-L-alanyl-D-glutamyl-meso-2,6-diaminopimeloyl-D-alanyl-D-alanine + UMP. Its pathway is cell wall biogenesis; peptidoglycan biosynthesis. Its function is as follows. Catalyzes the initial step of the lipid cycle reactions in the biosynthesis of the cell wall peptidoglycan: transfers peptidoglycan precursor phospho-MurNAc-pentapeptide from UDP-MurNAc-pentapeptide onto the lipid carrier undecaprenyl phosphate, yielding undecaprenyl-pyrophosphoryl-MurNAc-pentapeptide, known as lipid I. The protein is Phospho-N-acetylmuramoyl-pentapeptide-transferase of Salmonella gallinarum (strain 287/91 / NCTC 13346).